The sequence spans 194 residues: NAD(P)H-quinone oxidoreductase subunit I (194 aa).

4Fe-4S ferredoxin-type domains are found at residues 55–84 and 95–124; these read GRIHYEFDKCIACEVCVRVCPINLPVVDWE and NHYSIDFGVCIFCGNCVEYCPTNCLSMTEE. Positions 64, 67, 70, 74, 104, 107, 110, and 114 each coordinate [4Fe-4S] cluster. Positions 173 to 194 are disordered; it reads DLPANAPRPGARPEDLVEKTEA. Over residues 183-194 the composition is skewed to basic and acidic residues; it reads ARPEDLVEKTEA.

It belongs to the complex I 23 kDa subunit family. NDH-1 is composed of at least 11 different subunits. [4Fe-4S] cluster is required as a cofactor.

Its subcellular location is the cellular thylakoid membrane. It catalyses the reaction a plastoquinone + NADH + (n+1) H(+)(in) = a plastoquinol + NAD(+) + n H(+)(out). It carries out the reaction a plastoquinone + NADPH + (n+1) H(+)(in) = a plastoquinol + NADP(+) + n H(+)(out). Its function is as follows. NDH-1 shuttles electrons from an unknown electron donor, via FMN and iron-sulfur (Fe-S) centers, to quinones in the respiratory and/or the photosynthetic chain. The immediate electron acceptor for the enzyme in this species is believed to be plastoquinone. Couples the redox reaction to proton translocation, and thus conserves the redox energy in a proton gradient. In Nostoc sp. (strain PCC 7120 / SAG 25.82 / UTEX 2576), this protein is NAD(P)H-quinone oxidoreductase subunit I.